Here is a 777-residue protein sequence, read N- to C-terminus: UPF0313 protein VP1980 (777 aa).

Residues A363–A642 form the Radical SAM core domain. [4Fe-4S] cluster-binding residues include C377, C381, and C384. Residues A675–R777 form a disordered region. The segment covering Q680–K698 has biased composition (basic residues). Residues K709 to K719 are compositionally biased toward basic and acidic residues. Residues P736–G747 are compositionally biased toward polar residues. Residues K755–A769 are compositionally biased toward low complexity.

This sequence belongs to the UPF0313 family. The cofactor is [4Fe-4S] cluster.

In Vibrio parahaemolyticus serotype O3:K6 (strain RIMD 2210633), this protein is UPF0313 protein VP1980.